The following is a 266-amino-acid chain: Hydroxyethylthiazole kinase (266 aa).

Substrate is bound at residue methionine 43. ATP-binding residues include arginine 119 and threonine 166. Glycine 193 provides a ligand contact to substrate.

It belongs to the Thz kinase family. Requires Mg(2+) as cofactor.

It catalyses the reaction 5-(2-hydroxyethyl)-4-methylthiazole + ATP = 4-methyl-5-(2-phosphooxyethyl)-thiazole + ADP + H(+). Its pathway is cofactor biosynthesis; thiamine diphosphate biosynthesis; 4-methyl-5-(2-phosphoethyl)-thiazole from 5-(2-hydroxyethyl)-4-methylthiazole: step 1/1. In terms of biological role, catalyzes the phosphorylation of the hydroxyl group of 4-methyl-5-beta-hydroxyethylthiazole (THZ). This is Hydroxyethylthiazole kinase from Methanococcus maripaludis (strain DSM 14266 / JCM 13030 / NBRC 101832 / S2 / LL).